Consider the following 565-residue polypeptide: Probable alpha-L-arabinofuranosidase A (565 aa).

An N-terminal signal peptide occupies residues M1 to A19. 7 N-linked (GlcNAc...) asparagine glycosylation sites follow: N71, N91, N128, N303, N362, N486, and N501.

The protein belongs to the glycosyl hydrolase 51 family.

It is found in the secreted. The catalysed reaction is Hydrolysis of terminal non-reducing alpha-L-arabinofuranoside residues in alpha-L-arabinosides.. It participates in glycan metabolism; L-arabinan degradation. In terms of biological role, alpha-L-arabinofuranosidase involved in the degradation of arabinoxylan, a major component of plant hemicellulose. Acts only on small linear 1,5-alpha-linked L-arabinofuranosyl oligosaccharides. The chain is Probable alpha-L-arabinofuranosidase A (abfA) from Emericella nidulans (strain FGSC A4 / ATCC 38163 / CBS 112.46 / NRRL 194 / M139) (Aspergillus nidulans).